The following is a 591-amino-acid chain: ADP-ribosylating toxin CARDS (591 aa).

The mono-ADP ribosyltransferase (mART) domain stretch occupies residues 1 to 205 (MPNPVRFVYR…LPTPGIATPV (205 aa)). The NAD(+)-binding pocket stretch occupies residues 206–256 (HLSIPQAASVADVSEGTSASLSFACPDWSPPSSNGENPLDKCIAEKIDNYN). A disulfide bridge links Cys230 with Cys247. Residues 268 to 272 (KELED) carry the KELED motif, involved in host ER trafficking, solvent exposed in the crystal structure motif. Positions 273 to 439 (TPVYLRGIKT…QFVTMRAAST (167 aa)) are D2 domain. The segment at 440–591 (FFVDVQLGWY…ILVKDGFDRF (152 aa)) is D3 domain.

Belongs to the bacterial exotoxin subunit A family. Monomer. Binds to host (human) pulmonary surfactant-associated protein A1 (SFTPA1), the major mammalian protein component of pulmonary surfactant. Binds to host (human) surface annexin A2 (ANXA2) on the cell surface; anti-ANXA2 antibodies decrease binding to cells. Interacts with cytosolic host (human) NLRP3, which it ADP-ribosylates in vitro. 8 hours after treatment of HeLa cells with purified protein, a substantial amount is processed to 2 nearly equal-sized fragments. The disulfide bond between Cys-230 and Cys-247 is required to for the toxin to exert its mART and vacuolating activities within target cells, and for protein processing. Acidic pH in the endosome and retrograde transport are required for toxin cleavage, which is required for both toxin activities. Trypsin treatment under mild conditions leads to cleavage at Lys-305 and Lys-307; the 2 proteins fragments remain associated and can be internalized and vacuolate HeLa cells.

The protein localises to the cell membrane. The protein resides in the cytoplasm. It is found in the cell surface. Its subcellular location is the cell projection. It localises to the attachment organelle. The protein localises to the host cytoplasm. The protein resides in the host cytosol. It is found in the host endoplasmic reticulum. With respect to regulation, in vitro ADP-ribosylation is enhanced by dithiotheritol. Functionally, the main virulence factor for this bacteria, a mono-ADP-ribosylating toxin (mART), that transfers the ADP-ribosyl group from NAD(+) to multiple target proteins in vitro. Also elicits cytopathic effects in mammalian cells, such as disorganization and disruption of respiratory epithelial integrity in tracheal epithelium and vacuolization in the cytoplasm of CHO and HeLa cells as well as in mice and baboons. Treatment of mice or baboons with CARDS elicits a response that is consistent with human M.pneumoniae infections and mouse models of both infection and intoxication, suggesting that CARDS toxin is sufficient to cause prolonged inflammatory responses and airway dysfunction. Treatment of baboons with CARDS induces a number of cytokines; G-CSF (40 fold), IL-1Ra (10 fold), IL-6 and IL-8 (333 and 100 fold, respectively), MIP-1a (5 fold), and RANTES (9 fold). Treatment of mice gives a similar response. Binds phosphatidyl choline, dipalmitoylphosphatidylcholine (DPPC) and sphingomyelin via domains D2 plus D3. Has at least 2 host receptors SFTPA1 and ANXA2. Internalized by a clathrin-mediated process; protein is rapidly taken up at 37 degrees Celsius. Clathrin-independent or caveolin-dependent endocytosis were not detected. In HeLa cells internalized CARDS trafficks toward the nucleus by retrograde transport from early to late endosomes, then the Golgi apparatus; at 16 hours most toxin is concentrated in the perinuclear region in the host endoplasmic reticulum (ER). Failure to localize to the host ER prevents ADP-ribosylation and vacuolization. An acidic compartment is required to mediate retrotransport and processing of toxin into an N-terminal fragment with mART activity and a C-terminal fragment that is able to induce vacuolization. In terms of biological role, induces the host NLRP3 inflammasome to release interleukin-1 beta (IL-1 beta); IL-1 beta release requires ADP-ribosylation activity and uptake by host macrophages. In the host colocalizes with the NLRP3 inflammasome; ADP-ribosylates NLRP3 in vitro. ADP-ribosylation of NLRP3 may lead to hyperinflammation. This is ADP-ribosylating toxin CARDS from Mycoplasma pneumoniae (strain ATCC 29342 / M129 / Subtype 1) (Mycoplasmoides pneumoniae).